A 506-amino-acid chain; its full sequence is Galactose/methyl galactoside import ATP-binding protein MglA (506 aa).

2 consecutive ABC transporter domains span residues 14–249 (LEMS…VGRS) and 264–506 (VILE…SLHL). ATP is bound at residue 46-53 (GENGAGKS).

This sequence belongs to the ABC transporter superfamily. Galactose/methyl galactoside importer (TC 3.A.1.2.3) family. The complex is composed of one ATP-binding protein (MglA), two transmembrane proteins (MglC) and a solute-binding protein (MglB).

The protein resides in the cell inner membrane. It carries out the reaction D-galactose(out) + ATP + H2O = D-galactose(in) + ADP + phosphate + H(+). It catalyses the reaction methyl beta-D-galactoside(out) + ATP + H2O = methyl beta-D-galactoside(in) + ADP + phosphate + H(+). In terms of biological role, part of the ABC transporter complex MglABC involved in galactose/methyl galactoside import. Responsible for energy coupling to the transport system. This chain is Galactose/methyl galactoside import ATP-binding protein MglA, found in Escherichia coli O157:H7.